Here is a 619-residue protein sequence, read N- to C-terminus: MALLQIAEPGQAAAPHQHRLAVGIDLGTTNSLVASVRSGQSVILNDEQERSLVPSVVHYGVEEKKVGLEAFEQASLDPKNTVISVKRLIGRSLPDVQSRYSSLPYEFVASENGLPLIITAQGPKSPIEVSSDILLRLNHIAEQRLGGELSGVVITVPAYFDDAQRQSTKDAARLAGLNVLRLLNEPTAAALAYGLDSGQEGIIAVYDLGGGTFDISILRLSKGIFEVLATGGDTALGGDDFDHLIADWVIEQTKLKPQTANQQRELITLANQAKITLTNEKSAVISWQDFSVEISREQFNELIYPLVKRSLLTCRRALKDANVESEEVQAVVMVGGSTRVPYVREQVGEFFGKTPLTSIDPDKVVALGAAIQADILVGNKTDSDMLLLDVVPLSLGIETMGGLVEKIIPRNTTIPVARAQEFTTFKDGQTAMSVHVLQGERELVDDCRSLGRFTLRGIPPMAAGAAHIRVTYQVDADGLLSVTAMEKSTKVQASIQIKPSYGLTDEEVTAMIKSSFDNAQEDLQARELAEQRVEADRVIESVIVALQADGAELLSTDEFHHIETVLKQLMDVKQGSDRDAIAQGIKALDTATQEFAARRMNASINKALTGKNLSDIENP.

This sequence belongs to the heat shock protein 70 family.

In terms of biological role, chaperone involved in the maturation of iron-sulfur cluster-containing proteins. Has a low intrinsic ATPase activity which is markedly stimulated by HscB. The polypeptide is Chaperone protein HscA homolog (Haemophilus influenzae (strain PittEE)).